The chain runs to 387 residues: Type 2 DNA topoisomerase 6 subunit A (387 aa).

One can recognise a Topo IIA-type catalytic domain in the interval 12-160 (EARKKALAVF…MLILSKEKGK (149 aa)). Tyr-106 serves as the catalytic O-(5'-phospho-DNA)-tyrosine intermediate. Glu-207 and Asp-259 together coordinate Mg(2+).

The protein belongs to the TOP6A family. As to quaternary structure, homodimer. Heterotetramer of two Top6A and two Top6B chains. It depends on Mg(2+) as a cofactor.

The catalysed reaction is ATP-dependent breakage, passage and rejoining of double-stranded DNA.. In terms of biological role, relaxes both positive and negative superturns and exhibits a strong decatenase activity. The chain is Type 2 DNA topoisomerase 6 subunit A from Hyperthermus butylicus (strain DSM 5456 / JCM 9403 / PLM1-5).